The chain runs to 160 residues: MSVVSIEELEKARAYGRPLAGLDLGTKTIGVAISDLGLSFATPRAYLPRKKFQEDAKALLHLLSRENAGGVIVGLPINMDGSEGPRAQSTRAFVRNLQPLTKLPFAFWDERLSTVAAERALIEMDVSRAKRAQRIDSAAAAFILQGALDRLQALRADPGG.

The protein belongs to the YqgF nuclease family.

The protein localises to the cytoplasm. In terms of biological role, could be a nuclease involved in processing of the 5'-end of pre-16S rRNA. This Chelativorans sp. (strain BNC1) protein is Putative pre-16S rRNA nuclease.